A 257-amino-acid polypeptide reads, in one-letter code: Acyl-[acyl-carrier-protein]--UDP-N-acetylglucosamine O-acyltransferase (257 aa).

It belongs to the transferase hexapeptide repeat family. LpxA subfamily. As to quaternary structure, homotrimer.

It is found in the cytoplasm. The enzyme catalyses a (3R)-hydroxyacyl-[ACP] + UDP-N-acetyl-alpha-D-glucosamine = a UDP-3-O-[(3R)-3-hydroxyacyl]-N-acetyl-alpha-D-glucosamine + holo-[ACP]. It functions in the pathway glycolipid biosynthesis; lipid IV(A) biosynthesis; lipid IV(A) from (3R)-3-hydroxytetradecanoyl-[acyl-carrier-protein] and UDP-N-acetyl-alpha-D-glucosamine: step 1/6. Involved in the biosynthesis of lipid A, a phosphorylated glycolipid that anchors the lipopolysaccharide to the outer membrane of the cell. The polypeptide is Acyl-[acyl-carrier-protein]--UDP-N-acetylglucosamine O-acyltransferase (Fusobacterium nucleatum subsp. nucleatum (strain ATCC 25586 / DSM 15643 / BCRC 10681 / CIP 101130 / JCM 8532 / KCTC 2640 / LMG 13131 / VPI 4355)).